The chain runs to 527 residues: Proline--tRNA ligase (527 aa).

The protein belongs to the class-II aminoacyl-tRNA synthetase family. ProS type 3 subfamily. As to quaternary structure, homodimer.

It is found in the cytoplasm. It catalyses the reaction tRNA(Pro) + L-proline + ATP = L-prolyl-tRNA(Pro) + AMP + diphosphate. Functionally, catalyzes the attachment of proline to tRNA(Pro) in a two-step reaction: proline is first activated by ATP to form Pro-AMP and then transferred to the acceptor end of tRNA(Pro). In Sphingopyxis alaskensis (strain DSM 13593 / LMG 18877 / RB2256) (Sphingomonas alaskensis), this protein is Proline--tRNA ligase.